The following is a 426-amino-acid chain: 3-phosphoshikimate 1-carboxyvinyltransferase (426 aa).

3-phosphoshikimate contacts are provided by K22, S23, and R27. A phosphoenolpyruvate-binding site is contributed by K22. The phosphoenolpyruvate site is built by G96 and R124. 3-phosphoshikimate contacts are provided by S170, S171, Q172, S198, D314, N337, and K341. Q172 is a phosphoenolpyruvate binding site. D314 acts as the Proton acceptor in catalysis. Residues R345, R387, and K412 each coordinate phosphoenolpyruvate.

Belongs to the EPSP synthase family. In terms of assembly, monomer.

The protein resides in the cytoplasm. The catalysed reaction is 3-phosphoshikimate + phosphoenolpyruvate = 5-O-(1-carboxyvinyl)-3-phosphoshikimate + phosphate. The protein operates within metabolic intermediate biosynthesis; chorismate biosynthesis; chorismate from D-erythrose 4-phosphate and phosphoenolpyruvate: step 6/7. Functionally, catalyzes the transfer of the enolpyruvyl moiety of phosphoenolpyruvate (PEP) to the 5-hydroxyl of shikimate-3-phosphate (S3P) to produce enolpyruvyl shikimate-3-phosphate and inorganic phosphate. This chain is 3-phosphoshikimate 1-carboxyvinyltransferase, found in Shewanella halifaxensis (strain HAW-EB4).